Reading from the N-terminus, the 608-residue chain is Aspartate--tRNA(Asp/Asn) ligase (608 aa).

Position 175 (Glu175) interacts with L-aspartate. The segment at 199–202 (QLFK) is aspartate. Arg221 serves as a coordination point for L-aspartate. ATP contacts are provided by residues 221 to 223 (RDE) and Gln230. His453 lines the L-aspartate pocket. Glu487 is an ATP binding site. Arg494 lines the L-aspartate pocket. An ATP-binding site is contributed by 539-542 (GWDR). The segment at 566–608 (IDPLTDAPAAITPQQRKEAGIDAKPKPKAEAQAEAQAEESAEK) is disordered. A compositionally biased stretch (basic and acidic residues) spans 580-596 (QRKEAGIDAKPKPKAEA).

This sequence belongs to the class-II aminoacyl-tRNA synthetase family. Type 1 subfamily. As to quaternary structure, homodimer.

Its subcellular location is the cytoplasm. It carries out the reaction tRNA(Asx) + L-aspartate + ATP = L-aspartyl-tRNA(Asx) + AMP + diphosphate. Functionally, aspartyl-tRNA synthetase with relaxed tRNA specificity since it is able to aspartylate not only its cognate tRNA(Asp) but also tRNA(Asn). Reaction proceeds in two steps: L-aspartate is first activated by ATP to form Asp-AMP and then transferred to the acceptor end of tRNA(Asp/Asn). The sequence is that of Aspartate--tRNA(Asp/Asn) ligase from Corynebacterium glutamicum (strain R).